We begin with the raw amino-acid sequence, 697 residues long: uncharacterized protein (697 aa).

Positions 24–51 (CIRCRQKKIKCSGEKPSCQACSNNKVEC) form a DNA-binding region, zn(2)-C6 fungal-type. The helical transmembrane segment at 500–520 (YIMSPFVGFSILTAATIHMLL) threads the bilayer.

The protein localises to the nucleus membrane. This is an uncharacterized protein from Schizosaccharomyces pombe (strain 972 / ATCC 24843) (Fission yeast).